We begin with the raw amino-acid sequence, 63 residues long: Large ribosomal subunit protein uL29 (63 aa).

This sequence belongs to the universal ribosomal protein uL29 family.

The chain is Large ribosomal subunit protein uL29 from Pectobacterium carotovorum subsp. carotovorum (strain PC1).